The chain runs to 221 residues: MVRGKTEMKRIENATSRQVTFSKRRNGLLKKAFELSVLCDAEVALIIFSPRGKLYEFSSSSSIPKTVERYQKRIQDLGSNHKRNDNSQQSKDETYGLARKIEHLEISTRKMMGEGLDASSIEELQQLENQLDRSLMKIRAKKYQLLREETEKLKEKERNLIAENKMLMEKCEMQGRGIIGRISSSSSTSELDIDDNEMEVVTDLFIGPPETRHFKKFPPSN.

In terms of domain architecture, MADS-box spans 3–57 (RGKTEMKRIENATSRQVTFSKRRNGLLKKAFELSVLCDAEVALIIFSPRGKLYEF). The region spanning 87-177 (SQQSKDETYG…MEKCEMQGRG (91 aa)) is the K-box domain.

Interacts with AGL16. As to expression, preferentially expressed in roots. Expressed in lateral root cap, root epidermis, root endodermis, columella of the root meristematic region, the vascular cylinder in differentiated zones of the primary root and in emerged lateral root primordia. Expressed in pollen.

The protein localises to the nucleus. Functionally, transcriptional activator that regulates root development by controlling meristem size and patterning of the root apical meristem. Regulates auxin transport and gradients in the root meristematic cells via direct regulation of the auxin efflux carrier PIN1 and PIN4 gene expression. Binds specifically to the CArG-box DNA sequences in the promoter regions of PIN1 and PIN4 genes. Involved in the regulation of shoot apical meristem (SAM) cell identities and transitions. Promotes flowering transition and participates in flower meristem maintenance and determinacy. Positively regulates TFL1 and WUS expression. Binds directly to the TFL1 regulatory sequences. In Arabidopsis thaliana (Mouse-ear cress), this protein is Agamous-like MADS-box protein AGL14.